The sequence spans 372 residues: Spermidine/putrescine import ATP-binding protein PotA (372 aa).

In terms of domain architecture, ABC transporter spans 12–242 (IQLKGLNKSF…PTNLFVARFI (231 aa)). Residue 44 to 51 (GPSGCGKT) coordinates ATP.

The protein belongs to the ABC transporter superfamily. Spermidine/putrescine importer (TC 3.A.1.11.1) family. The complex is composed of two ATP-binding proteins (PotA), two transmembrane proteins (PotB and PotC) and a solute-binding protein (PotD).

It is found in the cell inner membrane. It carries out the reaction ATP + H2O + polyamine-[polyamine-binding protein]Side 1 = ADP + phosphate + polyamineSide 2 + [polyamine-binding protein]Side 1.. Part of the ABC transporter complex PotABCD involved in spermidine/putrescine import. Responsible for energy coupling to the transport system. This chain is Spermidine/putrescine import ATP-binding protein PotA, found in Photobacterium profundum (strain SS9).